We begin with the raw amino-acid sequence, 861 residues long: Semaphorin-4D (861 aa).

Residues 1–23 (MRMCAPVRGLFLALVVVLRTAVA) form the signal peptide. The Sema domain maps to 24–500 (FAPVPRLTWE…SNSGVVQAPL (477 aa)). Topologically, residues 24–733 (FAPVPRLTWE…TVYLKSSDNR (710 aa)) are extracellular. Residues N49 and N77 are each glycosylated (N-linked (GlcNAc...) asparagine). Cystine bridges form between C97-C108 and C126-C135. 2 N-linked (GlcNAc...) asparagine glycosylation sites follow: N139 and N191. Cystine bridges form between C257-C370 and C281-C326. N-linked (GlcNAc...) asparagine glycosylation is found at N379 and N419. The PSI domain occupies 502–551 (FCEKHGSCEDCVLARDPYCAWSPAIKACVTLHQEEASSRGWIQDMSGDTS). 4 cysteine pairs are disulfide-bonded: C503–C520, C509–C553, C512–C529, and C576–C624. Positions 555 to 636 (DKSKESFNQH…EERVRNKTVS (82 aa)) constitute an Ig-like C2-type domain. N-linked (GlcNAc...) asparagine glycans are attached at residues N613 and N632. The segment at 649 to 709 (VPRTPPSPTS…KSSSGTSCEP (61 aa)) is disordered. Positions 657–681 (TSEDAQTEGSKITSKMPVASTQGSS) are enriched in polar residues. The helical transmembrane segment at 734 to 754 (LLMSLLLFIFVLFLCLFSYNC) threads the bilayer. The Cytoplasmic segment spans residues 755–861 (YKGYLPGQCL…KFADSDADGD (107 aa)). Phosphoserine occurs at positions 782 and 832. Residues 793-839 (VEPGSFSQQNGDHPKPALDTGYETEQDTITSKVPTDREDSQRIDELS) are disordered. Basic and acidic residues predominate over residues 826–839 (PTDREDSQRIDELS).

It belongs to the semaphorin family. Homodimer. Interacts with PLXNB1. Interacts with PLXNB2. Strongly expressed in lymphoid tissues, especially in the thymus, as well as in the nervous tissues. Expressed in neurons and glia in the developing hippocampus.

It localises to the cell membrane. Its function is as follows. Cell surface receptor for PLXNB1 and PLXNB2 that plays an important role in cell-cell signaling. Regulates GABAergic synapse development. Promotes the development of inhibitory synapses in a PLXNB1-dependent manner. Modulates the complexity and arborization of developing neurites in hippocampal neurons by activating PLXNB1 and interaction with PLXNB1 mediates activation of RHOA. Promotes the migration of cerebellar granule cells. Plays a role in the immune system; induces B-cells to aggregate and improves their viability (in vitro). Induces endothelial cell migration through the activation of PTK2B/PYK2, SRC, and the phosphatidylinositol 3-kinase-AKT pathway. In Mus musculus (Mouse), this protein is Semaphorin-4D (Sema4d).